We begin with the raw amino-acid sequence, 176 residues long: Adenylyl-sulfate kinase (176 aa).

12 to 19 (GLSGAGKS) is a binding site for ATP. Serine 86 acts as the Phosphoserine intermediate in catalysis.

The protein belongs to the APS kinase family.

It carries out the reaction adenosine 5'-phosphosulfate + ATP = 3'-phosphoadenylyl sulfate + ADP + H(+). The protein operates within sulfur metabolism; hydrogen sulfide biosynthesis; sulfite from sulfate: step 2/3. Functionally, catalyzes the synthesis of activated sulfate. This Gloeothece citriformis (strain PCC 7424) (Cyanothece sp. (strain PCC 7424)) protein is Adenylyl-sulfate kinase.